The following is a 528-amino-acid chain: UDP-glucuronosyltransferase 1A9 (528 aa).

Positions 1 to 23 are cleaved as a signal peptide; sequence MAPVAFPTSFFLCLLLASGLAQA. N-linked (GlcNAc...) asparagine glycosylation occurs at Asn69. At Lys97 the chain carries N6-succinyllysine. N-linked (GlcNAc...) asparagine glycosylation is found at Asn290 and Asn428. A helical membrane pass occupies residues 486 to 506; sequence VIGFLLAIVLTVVFIVFKCCA.

It belongs to the UDP-glycosyltransferase family. As to quaternary structure, homodimer. Homooligomer. Interacts with UGT1A1, UGT1A3, UGT1A4, UGT1A6, UGT1A7, UGT1A8 and UGT1A10 to form heterodimers. Highly expressed in liver and at lower levels in stomach and kidney.

The protein localises to the endoplasmic reticulum membrane. The enzyme catalyses glucuronate acceptor + UDP-alpha-D-glucuronate = acceptor beta-D-glucuronoside + UDP + H(+). It carries out the reaction 2-hydroxy-17beta-estradiol + UDP-alpha-D-glucuronate = 2-hydroxy-17beta-estradiol 3-O-(beta-D-glucuronate) + UDP + H(+). It catalyses the reaction 4-hydroxy-17beta-estradiol + UDP-alpha-D-glucuronate = 17beta-estradiol 4-O-(beta-D-glucuronate) + UDP + H(+). The catalysed reaction is 2-hydroxyestrone + UDP-alpha-D-glucuronate = 2-hydroxyestrone 3-O-(beta-D-glucuronate) + UDP + H(+). The enzyme catalyses 4-hydroxyestrone + UDP-alpha-D-glucuronate = estrone 4-O-(beta-D-glucuronate) + UDP + H(+). It carries out the reaction prunetin + UDP-alpha-D-glucuronate = prunetin-5-O-beta-D-glucuronide + UDP. It catalyses the reaction 8-iso-prostaglandin F2alpha + UDP-alpha-D-glucuronate = 8-iso-prostaglandin F2alpha-glucuronide + UDP + H(+). The catalysed reaction is 5-epi-5-F2t-IsoP + UDP-alpha-D-glucuronate = 5-epi-5-F2t-IsoP-glucuronide + UDP + H(+). The enzyme catalyses (5Z,8Z,11Z,14Z)-eicosatetraenoate + UDP-alpha-D-glucuronate = O-[(5Z),(8Z),(11Z),(14Z)-eicosatetraenoyl]-beta-D-glucuronate + UDP. It carries out the reaction 15-hydroxy-(5Z,8Z,11Z,13E)-eicosatetraenoate + UDP-alpha-D-glucuronate = 15-O-(beta-D-glucuronosyl)-(5Z,8Z,11Z,14Z)-eicosatetraenoate + UDP + H(+). It catalyses the reaction prostaglandin B1 + UDP-alpha-D-glucuronate = 15-O-(beta-D-glucuronosyl)-prostaglandin B1 + UDP + H(+). The catalysed reaction is (E)-ferulate + UDP-alpha-D-glucuronate = (E)-4-O-(beta-D-glucuronosyl)-ferulate + UDP + H(+). The enzyme catalyses (E)-ferulate + UDP-alpha-D-glucuronate = (E)-ferulic acid beta-D-glucuronate ester + UDP. It carries out the reaction candesartan + UDP-alpha-D-glucuronate = candesartan O-beta-D-glucuronoside + UDP. It catalyses the reaction SN-38 + UDP-alpha-D-glucuronate = SN-38 O-beta-D-glucuronide + UDP + H(+). The catalysed reaction is mycophenolate + UDP-alpha-D-glucuronate = mycophenolate 7-O-beta-D-glucuronide + UDP + H(+). UDP-glucuronosyltransferase (UGT) that catalyzes phase II biotransformation reactions in which lipophilic substrates are conjugated with glucuronic acid to increase the metabolite's water solubility, thereby facilitating excretion into either the urine or bile. Essential for the elimination and detoxification of drugs, xenobiotics and endogenous compounds. Catalyzes the glucuronidation of endogenous estrogen hormones such as estradiol and estrone. Involved in the glucuronidation of arachidonic acid (AA) and AA-derived eicosanoids including 15-HETE, PGB1 and F2-isoprostanes (8-iso-PGF2alpha and 5-epi-5-F2t-IsoP). Glucuronates the phytochemical ferulic acid efficently at both the phenolic or the carboxylic acid group. Also catalyzes the glucuronidation of the isoflavones genistein, daidzein, glycitein, formononetin, biochanin A and prunetin, which are phytoestrogens with anticancer and cardiovascular properties. Involved in the glucuronidation of the AGTR1 angiotensin receptor antagonist caderastan, a drug which can inhibit the effect of angiotensin II. Involved in the biotransformation of 7-ethyl-10-hydroxycamptothecin (SN-38), the pharmacologically active metabolite of the anticancer drug irinotecan. Also metabolizes mycophenolate, an immunosuppressive agent. In Mus musculus (Mouse), this protein is UDP-glucuronosyltransferase 1A9.